The chain runs to 1415 residues: DNA-directed RNA polymerase subunit beta' (1415 aa).

Zn(2+)-binding residues include Cys-72, Cys-74, Cys-87, and Cys-90. The Mg(2+) site is built by Asp-463, Asp-465, and Asp-467. The Zn(2+) site is built by Cys-812, Cys-886, Cys-893, and Cys-896.

Belongs to the RNA polymerase beta' chain family. As to quaternary structure, the RNAP catalytic core consists of 2 alpha, 1 beta, 1 beta' and 1 omega subunit. When a sigma factor is associated with the core the holoenzyme is formed, which can initiate transcription. Requires Mg(2+) as cofactor. Zn(2+) is required as a cofactor.

The enzyme catalyses RNA(n) + a ribonucleoside 5'-triphosphate = RNA(n+1) + diphosphate. Functionally, DNA-dependent RNA polymerase catalyzes the transcription of DNA into RNA using the four ribonucleoside triphosphates as substrates. The protein is DNA-directed RNA polymerase subunit beta' of Dinoroseobacter shibae (strain DSM 16493 / NCIMB 14021 / DFL 12).